The following is a 249-amino-acid chain: Phosphate import ATP-binding protein PstB 1 (249 aa).

The ABC transporter domain occupies 4-244 (FNIENLDLFY…PKDDRTQGYV (241 aa)). Residue 36–43 (GPSGCGKS) coordinates ATP.

This sequence belongs to the ABC transporter superfamily. Phosphate importer (TC 3.A.1.7) family. In terms of assembly, the complex is composed of two ATP-binding proteins (PstB), two transmembrane proteins (PstC and PstA) and a solute-binding protein (PstS).

It localises to the cell inner membrane. It catalyses the reaction phosphate(out) + ATP + H2O = ADP + 2 phosphate(in) + H(+). Its function is as follows. Part of the ABC transporter complex PstSACB involved in phosphate import. Responsible for energy coupling to the transport system. The polypeptide is Phosphate import ATP-binding protein PstB 1 (Aliivibrio fischeri (strain ATCC 700601 / ES114) (Vibrio fischeri)).